A 435-amino-acid polypeptide reads, in one-letter code: Metacaspase-1A (435 aa).

2 disordered regions span residues 1 to 46 (MQNH…APPP) and 106 to 129 (YQNPYSHGHQGGPPPPPTDPVAFG). Residues 36-46 (SPQPGYGAPPP) are compositionally biased toward pro residues. Catalysis depends on residues His-231 and Cys-287.

This sequence belongs to the peptidase C14B family.

Its function is as follows. Involved in cell death (apoptosis). The sequence is that of Metacaspase-1A (casA) from Neosartorya fischeri (strain ATCC 1020 / DSM 3700 / CBS 544.65 / FGSC A1164 / JCM 1740 / NRRL 181 / WB 181) (Aspergillus fischerianus).